The chain runs to 61 residues: Large ribosomal subunit protein uL30 (61 aa).

The protein belongs to the universal ribosomal protein uL30 family. Part of the 50S ribosomal subunit.

The protein is Large ribosomal subunit protein uL30 of Neisseria meningitidis serogroup C (strain 053442).